We begin with the raw amino-acid sequence, 367 residues long: MPNQHILLSSNLLPVGSNISTWWNFGSMLLTCLILQTSTGFFLAIHYTANINLAFSSVIHILRDVPYGWIMQNTHAIGASMFFICIYIHIARGLYYGLYLNKKVWLSGTALLIILMATAFFGYVLPWGQMSFWAATVITNLLTAIPYLGVTLTTWLWGGFSINDPTLTRFFALHFILPFLIISLSSIHIILLHNEGSNNPLGTNPDIDKIPFHPYHSYKDVLMVTIMITILFTIMSFTPNLFNDPENFSKANPLVTPQHIKPEWYFLFAYGILRSIPNKLGGTLALLMSVIILTTAPFTHTSNVRSMTFRPLTQALFWTLIVTFITITWTATKPVEPPFIFISQMASAIYFSFFIINPILGWTENKL.

The next 4 helical transmembrane spans lie at 25–45 (FGSMLLTCLILQTSTGFFLAI), 69–90 (WIMQNTHAIGASMFFICIYIHI), 105–125 (WLSGTALLIILMATAFFGYVL), and 170–190 (FFALHFILPFLIISLSSIHII). Heme b-binding residues include histidine 75 and histidine 89. Residues histidine 174 and histidine 188 each contribute to the heme b site. Histidine 193 is an a ubiquinone binding site. Transmembrane regions (helical) follow at residues 218 to 238 (YKDVLMVTIMITILFTIMSFT), 280 to 300 (LGGTLALLMSVIILTTAPFTH), 312 to 332 (LTQALFWTLIVTFITITWTAT), and 339 to 358 (FIFISQMASAIYFSFFIINP).

This sequence belongs to the cytochrome b family. As to quaternary structure, the cytochrome bc1 complex contains 3 respiratory subunits (MT-CYB, CYC1 and UQCRFS1), 2 core proteins (UQCRC1 and UQCRC2) and probably 6 low-molecular weight proteins. Heme b serves as cofactor.

The protein localises to the mitochondrion inner membrane. Its function is as follows. Component of the ubiquinol-cytochrome c reductase complex (complex III or cytochrome b-c1 complex) that is part of the mitochondrial respiratory chain. The b-c1 complex mediates electron transfer from ubiquinol to cytochrome c. Contributes to the generation of a proton gradient across the mitochondrial membrane that is then used for ATP synthesis. The sequence is that of Cytochrome b (MT-CYB) from Austrelaps superbus (Lowland copperhead snake).